The primary structure comprises 221 residues: Histone H1.3 (221 aa).

Positions M1–K17 are enriched in low complexity. A disordered region spans residues M1–S42. At S2 the chain carries N-acetylserine. Position 2 is a phosphoserine (S2). Position 17 is an N6-acetyllysine (K17). Phosphothreonine is present on T18. Residues V20 to A36 show a composition bias toward basic residues. Residues K33, K35, and K53 each carry the N6-(beta-hydroxybutyryl)lysine modification. One can recognise an H15 domain in the interval S37 to K110. Residue R55 is modified to Citrulline. N6-(beta-hydroxybutyryl)lysine occurs at positions 65, 86, and 91. The interval G92–K221 is disordered. The residue at position 105 (S105) is a Phosphoserine; by PKC. An N6-(beta-hydroxybutyryl)lysine mark is found at K107 and K141. Basic residues-rich tracts occupy residues K120–K141, K150–K161, K170–A187, and K194–K221.

The protein belongs to the histone H1/H5 family. H1 histones are progressively phosphorylated during the cell cycle, becoming maximally phosphorylated during late G2 phase and M phase, and being dephosphorylated sharply thereafter. In terms of processing, hydroxybutyrylation of histones is induced by starvation. Post-translationally, citrullination at Arg-55 (H1R54ci) by PADI4 takes place within the DNA-binding site of H1 and results in its displacement from chromatin and global chromatin decondensation, thereby promoting pluripotency and stem cell maintenance.

Its subcellular location is the nucleus. The protein resides in the chromosome. Its function is as follows. Histone H1 protein binds to linker DNA between nucleosomes forming the macromolecular structure known as the chromatin fiber. Histones H1 are necessary for the condensation of nucleosome chains into higher-order structured fibers. Also acts as a regulator of individual gene transcription through chromatin remodeling, nucleosome spacing and DNA methylation. The polypeptide is Histone H1.3 (Mus musculus (Mouse)).